The sequence spans 438 residues: 3-phosphoshikimate 1-carboxyvinyltransferase (438 aa).

3-phosphoshikimate is bound by residues lysine 25, serine 26, and arginine 30. Lysine 25 contacts phosphoenolpyruvate. 2 residues coordinate phosphoenolpyruvate: glycine 99 and arginine 128. The 3-phosphoshikimate site is built by serine 173, glutamine 175, aspartate 325, and lysine 352. Phosphoenolpyruvate is bound at residue glutamine 175. The Proton acceptor role is filled by aspartate 325. Phosphoenolpyruvate-binding residues include arginine 356 and arginine 398.

This sequence belongs to the EPSP synthase family. Monomer.

It localises to the cytoplasm. It catalyses the reaction 3-phosphoshikimate + phosphoenolpyruvate = 5-O-(1-carboxyvinyl)-3-phosphoshikimate + phosphate. It functions in the pathway metabolic intermediate biosynthesis; chorismate biosynthesis; chorismate from D-erythrose 4-phosphate and phosphoenolpyruvate: step 6/7. In terms of biological role, catalyzes the transfer of the enolpyruvyl moiety of phosphoenolpyruvate (PEP) to the 5-hydroxyl of shikimate-3-phosphate (S3P) to produce enolpyruvyl shikimate-3-phosphate and inorganic phosphate. The protein is 3-phosphoshikimate 1-carboxyvinyltransferase of Prochlorococcus marinus (strain MIT 9515).